The chain runs to 193 residues: Large ribosomal subunit protein bL12cy (193 aa).

A chloroplast-targeting transit peptide spans 1–59; it reads MAATTLSIATTIRSSSFSSGLASAHHFPSRPLSIEFPFSFGVSSSSTLSHRAIYLHPIS. The segment covering 170-187 has biased composition (basic and acidic residues); it reads GVTKDEAEEDKTQLEEAG. The disordered stretch occupies residues 170 to 193; sequence GVTKDEAEEDKTQLEEAGAKVSIV.

It belongs to the bacterial ribosomal protein bL12 family.

The protein resides in the plastid. It localises to the chloroplast. This chain is Large ribosomal subunit protein bL12cy (RPL12B), found in Arabidopsis thaliana (Mouse-ear cress).